The sequence spans 329 residues: MAQSTLYSRVLGTGSYLPPDRVTNQQLADRLAKEGIETSDEWIVARTGIHARHFAAPDVTTSDLAYQAARRAIEAADIDPQSIDLIIVATSTPDFVFPSTACLLQNKLGIKSGGAAFDVQAVCSGFAYAMAMADSFIRGGQHRTALVVGAETFSRILDFKDRTTCVLFGDGAGAVILSASEEPGVLGSALHADGSYSNILCTPGNVNRGVIEGSAFLHMDGQAVFKLAVNVLEKVAVEALAKANLAPEQIDWLIPHQANIRIMTSTCRKLGLPQERMVVTVDQHGNTSAASIPMALDVAVRDGRIQRGQHVLIEGVGGGFTWGASVFRF.

Catalysis depends on residues cysteine 123 and histidine 256. The interval 257 to 261 (QANIR) is ACP-binding. Asparagine 286 is a catalytic residue.

This sequence belongs to the thiolase-like superfamily. FabH family. Homodimer.

It is found in the cytoplasm. The enzyme catalyses malonyl-[ACP] + acetyl-CoA + H(+) = 3-oxobutanoyl-[ACP] + CO2 + CoA. It functions in the pathway lipid metabolism; fatty acid biosynthesis. In terms of biological role, catalyzes the condensation reaction of fatty acid synthesis by the addition to an acyl acceptor of two carbons from malonyl-ACP. Catalyzes the first condensation reaction which initiates fatty acid synthesis and may therefore play a role in governing the total rate of fatty acid production. Possesses both acetoacetyl-ACP synthase and acetyl transacylase activities. Its substrate specificity determines the biosynthesis of branched-chain and/or straight-chain of fatty acids. The chain is Beta-ketoacyl-[acyl-carrier-protein] synthase III from Burkholderia vietnamiensis (strain G4 / LMG 22486) (Burkholderia cepacia (strain R1808)).